Consider the following 476-residue polypeptide: tRNA(Ile)-lysidine synthase (476 aa).

Position 25–30 (25–30) interacts with ATP; sequence SGGPDS.

It belongs to the tRNA(Ile)-lysidine synthase family.

Its subcellular location is the cytoplasm. It carries out the reaction cytidine(34) in tRNA(Ile2) + L-lysine + ATP = lysidine(34) in tRNA(Ile2) + AMP + diphosphate + H(+). Functionally, ligates lysine onto the cytidine present at position 34 of the AUA codon-specific tRNA(Ile) that contains the anticodon CAU, in an ATP-dependent manner. Cytidine is converted to lysidine, thus changing the amino acid specificity of the tRNA from methionine to isoleucine. The chain is tRNA(Ile)-lysidine synthase from Bacillus licheniformis (strain ATCC 14580 / DSM 13 / JCM 2505 / CCUG 7422 / NBRC 12200 / NCIMB 9375 / NCTC 10341 / NRRL NRS-1264 / Gibson 46).